A 203-amino-acid chain; its full sequence is Probable NADPH:quinone oxidoreductase 2 (203 aa).

Belongs to the SsuE family. As to quaternary structure, homotetramer. FMN serves as cofactor.

It carries out the reaction a quinone + NADH + H(+) = a quinol + NAD(+). It catalyses the reaction a quinone + NADPH + H(+) = a quinol + NADP(+). Functionally, the enzyme apparently serves as a quinone reductase in connection with conjugation reactions of hydroquinones involved in detoxification pathways. This chain is Probable NADPH:quinone oxidoreductase 2, found in Oryza sativa subsp. japonica (Rice).